The following is a 167-amino-acid chain: Small ribosomal subunit protein uS5 (167 aa).

Residues 11–74 form the S5 DRBM domain; that stretch reads LQEKLIAVNR…EKARRAMINV (64 aa).

The protein belongs to the universal ribosomal protein uS5 family. As to quaternary structure, part of the 30S ribosomal subunit. Contacts proteins S4 and S8.

In terms of biological role, with S4 and S12 plays an important role in translational accuracy. Located at the back of the 30S subunit body where it stabilizes the conformation of the head with respect to the body. The protein is Small ribosomal subunit protein uS5 of Yersinia pseudotuberculosis serotype O:1b (strain IP 31758).